The chain runs to 819 residues: Leucine--tRNA ligase (819 aa).

Positions 40-51 match the 'HIGH' region motif; that stretch reads PYPSGAGLHVGH. A 'KMSKS' region motif is present at residues 600 to 604; the sequence is KMSKS. Lys-603 provides a ligand contact to ATP.

The protein belongs to the class-I aminoacyl-tRNA synthetase family.

It is found in the cytoplasm. It catalyses the reaction tRNA(Leu) + L-leucine + ATP = L-leucyl-tRNA(Leu) + AMP + diphosphate. This is Leucine--tRNA ligase from Chlamydia trachomatis serovar A (strain ATCC VR-571B / DSM 19440 / HAR-13).